A 673-amino-acid polypeptide reads, in one-letter code: DNA ligase (673 aa).

NAD(+) is bound by residues 33–37 (DHQYD), 83–84 (SL), and Glu-117. Residue Lys-119 is the N6-AMP-lysine intermediate of the active site. The NAD(+) site is built by Arg-140, Glu-175, Lys-282, and Lys-306. Positions 400, 403, 418, and 424 each coordinate Zn(2+). A BRCT domain is found at 592-673 (RGSSAISGKT…WVKMVEDARS (82 aa)).

It belongs to the NAD-dependent DNA ligase family. LigA subfamily. Mg(2+) serves as cofactor. It depends on Mn(2+) as a cofactor.

It carries out the reaction NAD(+) + (deoxyribonucleotide)n-3'-hydroxyl + 5'-phospho-(deoxyribonucleotide)m = (deoxyribonucleotide)n+m + AMP + beta-nicotinamide D-nucleotide.. Its function is as follows. DNA ligase that catalyzes the formation of phosphodiester linkages between 5'-phosphoryl and 3'-hydroxyl groups in double-stranded DNA using NAD as a coenzyme and as the energy source for the reaction. It is essential for DNA replication and repair of damaged DNA. In Anaplasma marginale (strain Florida), this protein is DNA ligase.